Reading from the N-terminus, the 408-residue chain is Interferon-activable protein 203 (408 aa).

A Pyrin domain is found at 1-87 (MAEYKNIVLL…AKKLKTEKAK (87 aa)). A disordered region spans residues 84–208 (EKAKVQEKKK…EGHHQGPKQV (125 aa)). A compositionally biased stretch (basic residues) spans 92 to 102 (KKGKCKTAGKK). The span at 150–159 (AQLPETSGTN) shows a compositional bias: polar residues. The 199-residue stretch at 190 to 388 (TVPKEPSREE…SVRHSYMQVI (199 aa)) folds into the HIN-200 domain.

Belongs to the HIN-200 family. In terms of tissue distribution, constitutively expressed in the thymus, bone marrow and spleen. Isoform 1 and isoform 3 are present in liver (at protein level).

The protein localises to the nucleus. This is Interferon-activable protein 203 (Ifi203) from Mus musculus (Mouse).